A 352-amino-acid chain; its full sequence is Inorganic triphosphatase (352 aa).

The CYTH domain maps to 6–203 (LQEIELKLAI…KRGYLLGSKQ (198 aa)).

The enzyme catalyses triphosphate + H2O = phosphate + diphosphate. Involved in the hydrolysis of the beta-gamma-phosphoanhydride linkage of triphosphate-containing substrates (inorganic or nucleoside-linked). Catalyzes the hydrolysis of inorganic triphosphate (PPPi), which could be cytotoxic because of its high affinity for calcium ion, thereby interfering with calcium signaling. This is Inorganic triphosphatase from Haemophilus influenzae (strain ATCC 51907 / DSM 11121 / KW20 / Rd).